Consider the following 311-residue polypeptide: Tyrosine recombinase XerD (311 aa).

The region spanning 3–88 (DMSAAYVEAF…ALRQFYKFLY (86 aa)) is the Core-binding (CB) domain. Positions 109–298 (TLPKTLSIED…LEERLHDLVQ (190 aa)) constitute a Tyr recombinase domain. Residues Arg-156, Lys-180, His-250, Arg-253, and His-276 contribute to the active site. Tyr-285 functions as the O-(3'-phospho-DNA)-tyrosine intermediate in the catalytic mechanism.

The protein belongs to the 'phage' integrase family. XerD subfamily. In terms of assembly, forms a cyclic heterotetrameric complex composed of two molecules of XerC and two molecules of XerD.

It is found in the cytoplasm. In terms of biological role, site-specific tyrosine recombinase, which acts by catalyzing the cutting and rejoining of the recombining DNA molecules. The XerC-XerD complex is essential to convert dimers of the bacterial chromosome into monomers to permit their segregation at cell division. It also contributes to the segregational stability of plasmids. This chain is Tyrosine recombinase XerD, found in Rhizobium meliloti (strain 1021) (Ensifer meliloti).